The chain runs to 392 residues: Cell division protein DivIB (392 aa).

The segment at 1–87 is disordered; it reads MSEKDNNLTP…ETQSSEAPIE (87 aa). Residues 1 to 131 are Cytoplasmic-facing; that stretch reads MSEKDNNLTP…KGSAPLLKKM (131 aa). Residues 14–32 show a composition bias toward basic and acidic residues; that stretch reads KHLEYQKRKAEEAKKEKKA. Residues 58-76 show a composition bias toward acidic residues; that stretch reads TRDEAESAELLEEGFETNN. Residues 132 to 152 form a helical membrane-spanning segment; the sequence is WPALAIVVLVFVGSLYLISPL. The POTRA domain maps to 153–224; sequence SKISTFSVSG…NRFEAIVKEH (72 aa). The Extracellular segment spans residues 153 to 392; the sequence is SKISTFSVSG…TAQSTTTSSN (240 aa). The interval 368–392 is disordered; the sequence is ISAQNAKKTDASSENTAQSTTTSSN.

It belongs to the FtsQ/DivIB family. DivIB subfamily.

The protein resides in the cell membrane. In terms of biological role, cell division protein that may be involved in stabilizing or promoting the assembly of the division complex. The chain is Cell division protein DivIB from Lactococcus lactis subsp. lactis (strain IL1403) (Streptococcus lactis).